The following is a 61-amino-acid chain: Photosystem II reaction center protein K (61 aa).

The propeptide occupies 1–24 (MLNIFSLIWICLNSALYSSGFFFG). The chain crosses the membrane as a helical span at residues 36-56 (IIDFMPVIPVFFFLLAFVWQA).

Belongs to the PsbK family. PSII is composed of 1 copy each of membrane proteins PsbA, PsbB, PsbC, PsbD, PsbE, PsbF, PsbH, PsbI, PsbJ, PsbK, PsbL, PsbM, PsbT, PsbX, PsbY, PsbZ, Psb30/Ycf12, at least 3 peripheral proteins of the oxygen-evolving complex and a large number of cofactors. It forms dimeric complexes.

Its subcellular location is the plastid. It localises to the chloroplast thylakoid membrane. One of the components of the core complex of photosystem II (PSII). PSII is a light-driven water:plastoquinone oxidoreductase that uses light energy to abstract electrons from H(2)O, generating O(2) and a proton gradient subsequently used for ATP formation. It consists of a core antenna complex that captures photons, and an electron transfer chain that converts photonic excitation into a charge separation. In Coffea arabica (Arabian coffee), this protein is Photosystem II reaction center protein K.